We begin with the raw amino-acid sequence, 309 residues long: Probable ABC transporter permease protein YesP (309 aa).

The next 6 membrane-spanning stretches (helical) occupy residues 29–49 (FIIGFLCFTVIPMGASLFLSF), 84–104 (FTYVLAGVPLRLGFALFIAVI), 114–134 (IYRTLFYLPSIIGGSVAVAIM), 167–187 (ALWTLILLSVWQFGSSMLIFL), 217–237 (LPILTPIIFFNLVMQTISAFM), and 275–295 (YASAMAWVMLVIVGLITLILF). In terms of domain architecture, ABC transmembrane type-1 spans 80 to 294 (LKVTFTYVLA…VIVGLITLIL (215 aa)).

This sequence belongs to the binding-protein-dependent transport system permease family. MalFG subfamily.

It localises to the cell membrane. Functionally, part of a binding-protein-dependent transport system. Probably responsible for the translocation of the substrate across the membrane. The sequence is that of Probable ABC transporter permease protein YesP (yesP) from Bacillus subtilis (strain 168).